A 285-amino-acid chain; its full sequence is ATP synthase gamma chain (285 aa).

This sequence belongs to the ATPase gamma chain family. As to quaternary structure, F-type ATPases have 2 components, CF(1) - the catalytic core - and CF(0) - the membrane proton channel. CF(1) has five subunits: alpha(3), beta(3), gamma(1), delta(1), epsilon(1). CF(0) has three main subunits: a, b and c.

The protein localises to the cell membrane. Its function is as follows. Produces ATP from ADP in the presence of a proton gradient across the membrane. The gamma chain is believed to be important in regulating ATPase activity and the flow of protons through the CF(0) complex. This Dehalococcoides mccartyi (strain ATCC BAA-2266 / KCTC 15142 / 195) (Dehalococcoides ethenogenes (strain 195)) protein is ATP synthase gamma chain.